The following is a 289-amino-acid chain: ATP synthase gamma chain (289 aa).

Belongs to the ATPase gamma chain family. In terms of assembly, F-type ATPases have 2 components, CF(1) - the catalytic core - and CF(0) - the membrane proton channel. CF(1) has five subunits: alpha(3), beta(3), gamma(1), delta(1), epsilon(1). CF(0) has three main subunits: a, b and c.

It is found in the cell inner membrane. In terms of biological role, produces ATP from ADP in the presence of a proton gradient across the membrane. The gamma chain is believed to be important in regulating ATPase activity and the flow of protons through the CF(0) complex. In Actinobacillus succinogenes (strain ATCC 55618 / DSM 22257 / CCUG 43843 / 130Z), this protein is ATP synthase gamma chain.